The primary structure comprises 492 residues: N-succinylglutamate 5-semialdehyde dehydrogenase (492 aa).

Residue 220–225 participates in NAD(+) binding; it reads GSANTG. Active-site residues include Glu243 and Cys277.

Belongs to the aldehyde dehydrogenase family. AstD subfamily.

The catalysed reaction is N-succinyl-L-glutamate 5-semialdehyde + NAD(+) + H2O = N-succinyl-L-glutamate + NADH + 2 H(+). It participates in amino-acid degradation; L-arginine degradation via AST pathway; L-glutamate and succinate from L-arginine: step 4/5. Its function is as follows. Catalyzes the NAD-dependent reduction of succinylglutamate semialdehyde into succinylglutamate. This chain is N-succinylglutamate 5-semialdehyde dehydrogenase, found in Escherichia fergusonii (strain ATCC 35469 / DSM 13698 / CCUG 18766 / IAM 14443 / JCM 21226 / LMG 7866 / NBRC 102419 / NCTC 12128 / CDC 0568-73).